The following is a 138-amino-acid chain: Putative membrane protein insertion efficiency factor (138 aa).

Residues 71-138 (YDPVPGTPEA…GTPSHTRGEN (68 aa)) form a disordered region. Basic and acidic residues predominate over residues 81–113 (RQWRELHPETARSKNEPIHDLTDDNPRDHEPAL). The segment covering 123–138 (PGSTHTGTPSHTRGEN) has biased composition (polar residues).

It belongs to the UPF0161 family.

The protein localises to the cell membrane. Its function is as follows. Could be involved in insertion of integral membrane proteins into the membrane. The sequence is that of Putative membrane protein insertion efficiency factor from Cutibacterium acnes (strain DSM 16379 / KPA171202) (Propionibacterium acnes).